A 364-amino-acid chain; its full sequence is Probable secreted lipase phiG (364 aa).

The N-terminal stretch at 1–18 is a signal peptide; that stretch reads MMPFMDLILSILVSSVLL. Asn49 is a glycosylation site (N-linked (GlcNAc...) asparagine). Ser203 (nucleophile) is an active-site residue. N-linked (GlcNAc...) asparagine glycosylation occurs at Asn262.

Belongs to the AB hydrolase superfamily.

It localises to the secreted. It catalyses the reaction a carboxylic ester + H2O = an alcohol + a carboxylate + H(+). Part of the gene cluster that mediates the biosynthesis of the antihypercholesterolemic agents phomoidrides which are dimeric anhydrides. The function of phiG within the pathway has still to be determined. The pathway begins with the highly reducing polyketide synthase phiA that catalyzes the formation of a C12-fatty acyl-ACP, starting from one acetate and 5 malonate units. The hydrolase phiM is involved in the release of the C12-fatty acyl chain from phiA. The alkylcitrate synthase (ACS) phiJ and the alkylcitrate dehydratase (ACDH) phiI then give rise to decarboxylated monomeric anhydrides by coupling the C12-fatty acyl chain with oxalacetic acid. The cyclase phiC is responsible for the dimerization of the monomeric anhydrides which leads to the production of prephomoidride that contains the characteristic bicyclo[4.3.1]deca-1,6-diene system of phomoidrides. Iterative oxidation catalyzed by the alpha-ketoglutarate-dependent dioxygenase phiK produced then phomoidride A. Finally, the methyltransferase phiE converts phomoidride A to phomoidride B via an acetalization reaction. The phosphatidylethanolamine-binding protein phiB and phiN are not essential for dimerization and their functions have still to be determined. This is Probable secreted lipase phiG from Fungal sp. (strain ATCC 74256).